Consider the following 513-residue polypeptide: Serine/threonine-protein phosphatase T (513 aa).

TPR repeat units follow at residues 12 to 45 (ALER…DSTQ), 46 to 79 (SIYF…DPKN), and 80 to 113 (IKAY…KPND). Positions 188–513 (KNMSQEFISK…MAYSNGGFGL (326 aa)) are catalytic. Residues Asp-249, His-251, Asp-278, and Asn-310 each contribute to the Mn(2+) site. His-311 acts as the Proton donor/acceptor in catalysis. Residues His-359 and His-434 each coordinate Mn(2+).

It belongs to the PPP phosphatase family. PP-5 (PP-T) subfamily. As to quaternary structure, interacts (via TPR repeats) with HSP82 (via C-terminal MEEVD pentapeptide). Requires Mg(2+) as cofactor. The cofactor is Mn(2+).

Its subcellular location is the nucleus. It carries out the reaction O-phospho-L-seryl-[protein] + H2O = L-seryl-[protein] + phosphate. The enzyme catalyses O-phospho-L-threonyl-[protein] + H2O = L-threonyl-[protein] + phosphate. Stimulated by arachidonic acid and other unsaturated fatty acids, and by arachidoyl coenzyme A. Functionally, protein phosphatase that specifically binds to and dephosphorylates the molecular chaperone Hsp90 (HSC82 and HSP82). Dephosphorylation positively regulates the Hsp90 chaperone machinery. This is Serine/threonine-protein phosphatase T (PPT1) from Saccharomyces cerevisiae (strain ATCC 204508 / S288c) (Baker's yeast).